We begin with the raw amino-acid sequence, 205 residues long: Large ribosomal subunit protein uL4 (205 aa).

The interval 65 to 99 (RQKGTGGARHGSRKSPTFRHGGVYKGPTPRSHGHD) is disordered.

It belongs to the universal ribosomal protein uL4 family. As to quaternary structure, part of the 50S ribosomal subunit.

In terms of biological role, one of the primary rRNA binding proteins, this protein initially binds near the 5'-end of the 23S rRNA. It is important during the early stages of 50S assembly. It makes multiple contacts with different domains of the 23S rRNA in the assembled 50S subunit and ribosome. Functionally, forms part of the polypeptide exit tunnel. The sequence is that of Large ribosomal subunit protein uL4 from Ruegeria pomeroyi (strain ATCC 700808 / DSM 15171 / DSS-3) (Silicibacter pomeroyi).